Here is a 473-residue protein sequence, read N- to C-terminus: Aspartyl/glutamyl-tRNA(Asn/Gln) amidotransferase subunit B (473 aa).

The protein belongs to the GatB/GatE family. GatB subfamily. In terms of assembly, heterotrimer of A, B and C subunits.

It carries out the reaction L-glutamyl-tRNA(Gln) + L-glutamine + ATP + H2O = L-glutaminyl-tRNA(Gln) + L-glutamate + ADP + phosphate + H(+). The catalysed reaction is L-aspartyl-tRNA(Asn) + L-glutamine + ATP + H2O = L-asparaginyl-tRNA(Asn) + L-glutamate + ADP + phosphate + 2 H(+). Its function is as follows. Allows the formation of correctly charged Asn-tRNA(Asn) or Gln-tRNA(Gln) through the transamidation of misacylated Asp-tRNA(Asn) or Glu-tRNA(Gln) in organisms which lack either or both of asparaginyl-tRNA or glutaminyl-tRNA synthetases. The reaction takes place in the presence of glutamine and ATP through an activated phospho-Asp-tRNA(Asn) or phospho-Glu-tRNA(Gln). The polypeptide is Aspartyl/glutamyl-tRNA(Asn/Gln) amidotransferase subunit B (Methanococcoides burtonii (strain DSM 6242 / NBRC 107633 / OCM 468 / ACE-M)).